A 421-amino-acid polypeptide reads, in one-letter code: Glutamate-1-semialdehyde 2,1-aminomutase 1 (421 aa).

At Lys258 the chain carries N6-(pyridoxal phosphate)lysine.

Belongs to the class-III pyridoxal-phosphate-dependent aminotransferase family. HemL subfamily. It depends on pyridoxal 5'-phosphate as a cofactor.

It is found in the cytoplasm. It catalyses the reaction (S)-4-amino-5-oxopentanoate = 5-aminolevulinate. It participates in porphyrin-containing compound metabolism; protoporphyrin-IX biosynthesis; 5-aminolevulinate from L-glutamyl-tRNA(Glu): step 2/2. This Cenarchaeum symbiosum (strain A) protein is Glutamate-1-semialdehyde 2,1-aminomutase 1.